A 337-amino-acid chain; its full sequence is MTAGGQAEAEGAGGEPGAARLPSRVARLLSALFYGTCSFLIVLVNKALLTTYGFPSPIFLGIGQMAATIMILYVSKLNKIIHFPDFDKKIPVKLFPLPLLYVGNHISGLSSTSKLSLPMFTVLRKFTIPLTLLLETIILGKQYSLNIILSVFAIILGAFIAAGSDLAFNLEGYIFVFLNDIFTAANGVYTKQKMDPKELGKYGVLFYNACFMIIPTLIISVSTGDLQQATEFNQWKNVVFILQFLLSCFLGFLLMYSTVLCSYYNSALTTAVVGAIKNVSVAYIGILIGGDYIFSLLNFVGLNICMAGGLRYSFLTLSSQLKPKPVGEENICLDLKS.

At 1–27 (MTAGGQAEAEGAGGEPGAARLPSRVAR) the chain is on the cytoplasmic side. A helical transmembrane segment spans residues 28–48 (LLSALFYGTCSFLIVLVNKAL). The Extracellular portion of the chain corresponds to 49–53 (LTTYG). Residues 54–74 (FPSPIFLGIGQMAATIMILYV) traverse the membrane as a helical segment. Over 75 to 146 (SKLNKIIHFP…IILGKQYSLN (72 aa)) the chain is Cytoplasmic. A run of 2 helical transmembrane segments spans residues 147-167 (IILS…SDLA) and 168-188 (FNLE…ANGV). Topologically, residues 189 to 201 (YTKQKMDPKELGK) are cytoplasmic. A helical membrane pass occupies residues 202-222 (YGVLFYNACFMIIPTLIISVS). At 223–237 (TGDLQQATEFNQWKN) the chain is on the extracellular side. The helical transmembrane segment at 238-258 (VVFILQFLLSCFLGFLLMYST) threads the bilayer. Residues 259-265 (VLCSYYN) are Cytoplasmic-facing. Residues 266 to 288 (SALTTAVVGAIKNVSVAYIGILI) form a helical membrane-spanning segment. Topologically, residues 289 to 292 (GGDY) are extracellular. Residues 293–315 (IFSLLNFVGLNICMAGGLRYSFL) traverse the membrane as a helical segment. Topologically, residues 316-337 (TLSSQLKPKPVGEENICLDLKS) are cytoplasmic.

This sequence belongs to the TPT transporter family. SLC35D subfamily. As to expression, highly expressed in heart, kidney, small intestine, placenta, lung and peripheral blood leukocyte. Weakly expressed in skeletal muscle and spleen. Not expressed in brain, colon and thymus.

The protein resides in the golgi apparatus membrane. It carries out the reaction UMP(out) + UDP-N-acetyl-alpha-D-glucosamine(in) = UMP(in) + UDP-N-acetyl-alpha-D-glucosamine(out). It catalyses the reaction UMP(out) + UDP-alpha-D-glucose(in) = UMP(in) + UDP-alpha-D-glucose(out). Its function is as follows. Nucleotide sugar antiporter transporting UDP-N-acetylglucosamine (UDP-GlcNAc) and UDP-glucose (UDP-Glc) from the cytosol into the lumen of the Golgi in exchange of UMP. By supplying UDP-N-acetylglucosamine, a donor substrate to heparan sulfate synthases, probably takes part in the synthesis of these glycoconjugates. The protein is Nucleotide sugar transporter SLC35D2 of Homo sapiens (Human).